The following is a 955-amino-acid chain: Mediator of RNA polymerase II transcription subunit 16 (955 aa).

It belongs to the Mediator complex subunit 16 family. In terms of assembly, component of the Mediator complex.

The protein resides in the nucleus. Functionally, component of the Mediator complex, a coactivator involved in the regulated transcription of nearly all RNA polymerase II-dependent genes. Mediator functions as a bridge to convey information from gene-specific regulatory proteins to the basal RNA polymerase II transcription machinery. Mediator is recruited to promoters by direct interactions with regulatory proteins and serves as a scaffold for the assembly of a functional preinitiation complex with RNA polymerase II and the general transcription factors. The chain is Mediator of RNA polymerase II transcription subunit 16 (sin4) from Neosartorya fischeri (strain ATCC 1020 / DSM 3700 / CBS 544.65 / FGSC A1164 / JCM 1740 / NRRL 181 / WB 181) (Aspergillus fischerianus).